A 217-amino-acid chain; its full sequence is GTP-binding protein yptV2 (217 aa).

20 to 27 (GDSGVGKS) provides a ligand contact to GTP. The Effector region signature appears at 42–50 (FITTIGIDF). GTP-binding positions include 68–72 (DTAGQ) and 126–129 (NKLD). The disordered stretch occupies residues 198 to 217 (QPVRLTSGSPSPAQGKSCCR). Polar residues predominate over residues 201–211 (RLTSGSPSPAQ). 2 S-geranylgeranyl cysteine lipidation sites follow: Cys215 and Cys216.

The protein belongs to the small GTPase superfamily. Rab family.

The protein resides in the cell membrane. Its function is as follows. Protein transport. Probably involved in vesicular traffic. The sequence is that of GTP-binding protein yptV2 (YPTV2) from Volvox carteri (Green alga).